The following is a 686-amino-acid chain: Chromatin modification-related protein EAF1 (686 aa).

The segment at 71–97 (QMKRRQNDHHNQGPPPKVQKSTVDSLK) is disordered. Positions 202 to 280 (FKFIRKSKKK…DKSIIRNLPV (79 aa)) constitute an HSA domain. The 65-residue stretch at 354–418 (IPTIWLPEDD…FERYIQLNDK (65 aa)) folds into the Myb-like domain. 3 disordered regions span residues 493-517 (RKST…RIPT), 544-617 (ARMV…QQRR), and 657-686 (QQGY…PNNA). Residues 497 to 506 (AELQANQNVT) show a composition bias toward polar residues. Residues 554-568 (APAPAPAPPPPPPPK) show a composition bias toward pro residues. A compositionally biased stretch (polar residues) spans 574 to 588 (TTPNGTPLTNEQIQH). Over residues 599 to 613 (LQQQQQQQQQQQHQQ) the composition is skewed to low complexity. The segment covering 671-686 (QKNQTASPMSGSPNNA) has biased composition (polar residues).

It belongs to the EAF1 family. Component of the NuA4 histone acetyltransferase complex.

It localises to the nucleus. In terms of biological role, component of the NuA4 histone acetyltransferase complex which is involved in transcriptional activation of selected genes principally by acetylation of nucleosomal histone H4 and H2A. The NuA4 complex is also involved in DNA repair. This Candida albicans (strain SC5314 / ATCC MYA-2876) (Yeast) protein is Chromatin modification-related protein EAF1 (VID21).